Here is a 725-residue protein sequence, read N- to C-terminus: A-agglutinin anchorage subunit (725 aa).

Positions 1-24 (MTLSFAHFTYLFTILLGLTNIALA) are cleaved as a signal peptide. 19 repeat units span residues 53–149 (VSTS…EVGT), 182–188 (TTTSLSS), 189–195 (TSTSPSS), 196–202 (TSTSPSS), 203–209 (TSTSSSS), 210–216 (TSTSSSS), 217–223 (TSTSSSS), 224–230 (TSTSPSS), 231–237 (TSTSSSL), 238–244 (TSTSSSS), 245–251 (TSTSQSS), 252–258 (TSTSSSS), 259–265 (TSTSPSS), 266–272 (TSTSSSS), 273–279 (TSTSPSS), 280–286 (KSTSASS), 287–293 (TSTSSYS), 294–300 (TSTSPSL), and 301–307 (TSSSPTL). The interval 53 to 493 (VSTSTIVQAG…TSHSYSSVQT (441 aa)) is 2 X approximate repeats. Disordered regions lie at residues 168–318 (PVTS…TSIS) and 335–363 (SSTS…TPSM). Positions 182-307 (TTTSLSSTST…PSLTSSSPTL (126 aa)) are 18 X approximate tandem repeats, Ser/Thr-rich. Residues 395–493 (MSTYFTTVSG…TSHSYSSVQT (99 aa)) form a 1-2 repeat. Gly-699 carries the GPI-anchor amidated glycine lipid modification. The propeptide at 700–725 (SGSQTRLPLGKLVFAIMAVACNVIFS) is removed in mature form.

In terms of assembly, heterodimer; disulfide-linked. In terms of processing, extensively O-glycosylated by PMT1 and PMT2. The GPI-anchor is attached to the protein in the endoplasmic reticulum and serves to target the protein to the cell surface. There, the glucosamine-inositol phospholipid moiety is cleaved off and the GPI-modified mannoprotein is covalently attached via its lipidless GPI glycan remnant to the 1,6-beta-glucan of the outer cell wall layer.

The protein localises to the secreted. The protein resides in the cell wall. It is found in the membrane. Its function is as follows. Cell wall anchoring subunit of the a-agglutinin heterodimer. S.cerevisiae a and alpha cells express the complementary cell surface glycoproteins a-agglutinin and alpha-agglutinin, respectively, which interact with one another to promote cellular aggregation during mating. The polypeptide is A-agglutinin anchorage subunit (AGA1) (Saccharomyces cerevisiae (strain ATCC 204508 / S288c) (Baker's yeast)).